A 256-amino-acid polypeptide reads, in one-letter code: MGRGRVQLKRIENKINRQVTFSKRRAGLLKKAHEISVLCDAEVALVVFSHKGKLFEYSTDSCMEKILERYERYSYAERQLIAPESDVNTNWSMEYNRLKAKIELLERNQRHYLGEDLQAMSPKELQNLEQQLDTALKHIRTRKNQLMYESINELQKKEKAIQEQNSMLFKQIKEREKIFRAQQEQWDQQNQGPNMPPPLPPQQHQIQHPYMLFHQPFPFFNMGGLYQEDDPMAMRRNDLELTFEPVYNCNLGCFAA.

The 61-residue stretch at Met1–Ser61 folds into the MADS-box domain. Positions Asn88–Ile178 constitute a K-box domain.

Homodimer capable of binding to CArG-box sequences.

Its subcellular location is the nucleus. In terms of biological role, transcription factor that promotes early floral meristem identity in synergy with LEAFY. Displays a redundant function with CAULIFLOWER in the up-regulation of LEAFY. Required subsequently for the transition of an inflorescence meristem into a floral meristem, and for the normal development of sepals and petals in flowers. Regulates positively B class homeotic proteins. In Citrus sinensis (Sweet orange), this protein is Floral homeotic protein APETALA 1 (AP1).